The following is a 154-amino-acid chain: Large ribosomal subunit protein uL13 (154 aa).

This sequence belongs to the universal ribosomal protein uL13 family. As to quaternary structure, part of the 50S ribosomal subunit.

In terms of biological role, this protein is one of the early assembly proteins of the 50S ribosomal subunit, although it is not seen to bind rRNA by itself. It is important during the early stages of 50S assembly. This Brucella abortus (strain S19) protein is Large ribosomal subunit protein uL13.